The sequence spans 327 residues: ATP-dependent 6-phosphofructokinase (327 aa).

An ATP-binding site is contributed by Gly-12. Residues 22 to 26 (RGVVR) and 55 to 60 (RYSVSD) each bind ADP. Residues 73–74 (RF) and 103–106 (GDGS) contribute to the ATP site. A Mg(2+)-binding site is contributed by Asp-104. 127–129 (TID) is a binding site for substrate. The active-site Proton acceptor is Asp-129. Arg-156 lines the ADP pocket. Residues Arg-164 and 171–173 (MGR) contribute to the substrate site. Residues 187–189 (GCE), Lys-213, and 215–217 (KKH) contribute to the ADP site. Substrate-binding positions include Glu-224, Arg-245, and 251–254 (HIQR).

It belongs to the phosphofructokinase type A (PFKA) family. ATP-dependent PFK group I subfamily. Prokaryotic clade 'B1' sub-subfamily. In terms of assembly, homotetramer. The cofactor is Mg(2+).

It is found in the cytoplasm. The catalysed reaction is beta-D-fructose 6-phosphate + ATP = beta-D-fructose 1,6-bisphosphate + ADP + H(+). Its pathway is carbohydrate degradation; glycolysis; D-glyceraldehyde 3-phosphate and glycerone phosphate from D-glucose: step 3/4. Allosterically activated by ADP and other diphosphonucleosides, and allosterically inhibited by phosphoenolpyruvate. In terms of biological role, catalyzes the phosphorylation of D-fructose 6-phosphate to fructose 1,6-bisphosphate by ATP, the first committing step of glycolysis. The polypeptide is ATP-dependent 6-phosphofructokinase (Yersinia pseudotuberculosis serotype IB (strain PB1/+)).